A 213-amino-acid polypeptide reads, in one-letter code: Ribosomal RNA large subunit methyltransferase E (213 aa).

Residues glycine 60, tryptophan 62, aspartate 80, aspartate 96, and aspartate 121 each coordinate S-adenosyl-L-methionine. Lysine 161 serves as the catalytic Proton acceptor.

This sequence belongs to the class I-like SAM-binding methyltransferase superfamily. RNA methyltransferase RlmE family.

It localises to the cytoplasm. It catalyses the reaction uridine(2552) in 23S rRNA + S-adenosyl-L-methionine = 2'-O-methyluridine(2552) in 23S rRNA + S-adenosyl-L-homocysteine + H(+). In terms of biological role, specifically methylates the uridine in position 2552 of 23S rRNA at the 2'-O position of the ribose in the fully assembled 50S ribosomal subunit. The chain is Ribosomal RNA large subunit methyltransferase E from Xylella fastidiosa (strain 9a5c).